A 133-amino-acid polypeptide reads, in one-letter code: Putative N-acetylgalactosamine permease IIC component 2 (133 aa).

Residues 1-2 (ME) are Cytoplasmic-facing. A PTS EIIC type-4 domain is found at 1–133 (MEISLLQAFA…CDLATNPRRI (133 aa)). The helical transmembrane segment at 3-23 (ISLLQAFALGIIAFIAGLDMF) threads the bilayer. The Periplasmic segment spans residues 24 to 32 (NGLTHMHRP). Residues 33-53 (VVLGPLVGLVLGDLHTGILTG) traverse the membrane as a helical segment. Residues 54–65 (GTLELVWMGLAP) lie on the Cytoplasmic side of the membrane. Residues 66–86 (LAGAQPPNVIIGTIVGTAFAI) traverse the membrane as a helical segment. The Periplasmic portion of the chain corresponds to 87–93 (TTGVKPD). A helical transmembrane segment spans residues 94 to 114 (VAVGVAVPFAVAVQMGITFLF). Residues 115–133 (SVMSGVMSRCDLATNPRRI) lie on the Cytoplasmic side of the membrane.

It localises to the cell inner membrane. Its function is as follows. The phosphoenolpyruvate-dependent sugar phosphotransferase system (PTS), a major carbohydrate active -transport system, catalyzes the phosphorylation of incoming sugar substrates concomitant with their translocation across the cell membrane. This system is involved in N-acetylgalactosamine transport. This chain is Putative N-acetylgalactosamine permease IIC component 2 (agaW), found in Escherichia coli (strain K12).